Reading from the N-terminus, the 254-residue chain is NAD-dependent glycerol dehydrogenase (254 aa).

NAD(+) is bound at residue 18 to 47 (VVTGAASGIGKAMAELFSEKGAYVVLLDIK). Tyrosine 160 serves as the catalytic Proton acceptor. Lysine 164 contributes to the NAD(+) binding site.

Belongs to the short-chain dehydrogenases/reductases (SDR) family. Requires Mg(2+) as cofactor. Mn(2+) serves as cofactor.

The protein localises to the cytoplasm. It carries out the reaction glycerol + NAD(+) = dihydroxyacetone + NADH + H(+). Its activity is regulated as follows. Inhibited by Zn(2+). Involved in the glycerol metabolism. Catalyzes the NAD-dependent oxidation of glycerol to dihydroxyacetone (glycerone). GolD specifically uses NAD. In Listeria innocua serovar 6a (strain ATCC BAA-680 / CLIP 11262), this protein is NAD-dependent glycerol dehydrogenase.